The following is a 246-amino-acid chain: Major prion protein (246 aa).

The first 15 residues, 1-15 (MLVLFVATWSDLGLC), serve as a signal peptide directing secretion. Residues 16–223 (KKRPKPGGWN…ESQAYYQRGS (208 aa)) are interaction with GRB2, ERI3 and SYN1. Residues 18–102 (RPKPGGWNTG…HKPSKPKTSM (85 aa)) form a disordered region. 5 repeat units span residues 44 to 52 (PQGGGGWGQ), 53 to 60 (PHGGGWGQ), 61 to 68 (PHGGGWGQ), 69 to 76 (PHGGGWGQ), and 77 to 84 (PHGGGWGQ). The 5 X 8 AA tandem repeats of P-H-G-G-G-W-G-Q stretch occupies residues 44 to 84 (PQGGGGWGQPHGGGWGQPHGGGWGQPHGGGWGQPHGGGWGQ). A compositionally biased stretch (gly residues) spans 45–88 (QGGGGWGQPHGGGWGQPHGGGWGQPHGGGWGQPHGGGWGQGGGT). Cu(2+) is bound by residues His54, Gly55, Gly56, His62, Gly63, Gly64, His70, Gly71, Gly72, His78, Gly79, and Gly80. Positions 91 to 102 (QWHKPSKPKTSM) are enriched in basic residues. Cys172 and Cys207 are joined by a disulfide. N-linked (GlcNAc...) asparagine glycosylation is found at Asn174 and Asn190. A lipid anchor (GPI-anchor amidated serine) is attached at Ser223. A propeptide spans 224–246 (SMVLFSSPPVILLISFLIFLIVG) (removed in mature form).

Belongs to the prion family. As to quaternary structure, monomer and homodimer. Has a tendency to aggregate into amyloid fibrils containing a cross-beta spine, formed by a steric zipper of superposed beta-strands. Soluble oligomers may represent an intermediate stage on the path to fibril formation. Copper binding may promote oligomerization. Interacts with GRB2, APP, ERI3/PRNPIP and SYN1. Mislocalized cytosolically exposed PrP interacts with MGRN1; this interaction alters MGRN1 subcellular location and causes lysosomal enlargement. Interacts with KIAA1191.

It is found in the cell membrane. Its subcellular location is the golgi apparatus. Functionally, its primary physiological function is unclear. Has cytoprotective activity against internal or environmental stresses. May play a role in neuronal development and synaptic plasticity. May be required for neuronal myelin sheath maintenance. May play a role in iron uptake and iron homeostasis. Soluble oligomers are toxic to cultured neuroblastoma cells and induce apoptosis (in vitro). Association with GPC1 (via its heparan sulfate chains) targets PRNP to lipid rafts. Also provides Cu(2+) or Zn(2+) for the ascorbate-mediated GPC1 deaminase degradation of its heparan sulfate side chains. The sequence is that of Major prion protein (PRNP) from Cercopithecus mona (Mona monkey).